Consider the following 179-residue polypeptide: Large ribosomal subunit protein uL5 (179 aa).

It belongs to the universal ribosomal protein uL5 family. In terms of assembly, part of the 50S ribosomal subunit; part of the 5S rRNA/L5/L18/L25 subcomplex. Contacts the 5S rRNA and the P site tRNA. Forms a bridge to the 30S subunit in the 70S ribosome.

This is one of the proteins that bind and probably mediate the attachment of the 5S RNA into the large ribosomal subunit, where it forms part of the central protuberance. In the 70S ribosome it contacts protein S13 of the 30S subunit (bridge B1b), connecting the 2 subunits; this bridge is implicated in subunit movement. Contacts the P site tRNA; the 5S rRNA and some of its associated proteins might help stabilize positioning of ribosome-bound tRNAs. The polypeptide is Large ribosomal subunit protein uL5 (Albidiferax ferrireducens (strain ATCC BAA-621 / DSM 15236 / T118) (Rhodoferax ferrireducens)).